The primary structure comprises 1319 residues: Chitin-binding domain protein cbd-1 (1319 aa).

Residues 1–19 form the signal peptide; it reads MGPQLATVSLLLLTFFSNS. Chitin-binding type-2 domains lie at 28–83, 96–141, and 190–236; these read ATEC…ECRV, EFDC…TQDC, and DFDC…QSCD. Intrachain disulfides connect Cys-61–Cys-72, Cys-128–Cys-141, and Cys-222–Cys-235. Residues 250-271 form a disordered region; that stretch reads YSTSTITTPQEDDSEYSSTTSA. The Chitin-binding type-2 4 domain maps to 304–357; that stretch reads PFVCQEGQVNSFGMCSSRFNRCQNNSVRSKQCPVNTLFESSLVMCVFDLPQCQP. An N-linked (GlcNAc...) asparagine glycan is attached at Asn-327. The cysteines at positions 335 and 348 are disulfide-linked. A disordered region spans residues 504 to 524; the sequence is KNRHSKKQLGPHEDPDGYDDE. Basic and acidic residues predominate over residues 513-524; sequence GPHEDPDGYDDE. The Chitin-binding type-2 5 domain maps to 566–614; sequence NKDCQQYTTPTFLTFGDCFDQFIFCSGNGINRMAACPIGETFDKTLRSC. Residues Cys-601 and Cys-614 are joined by a disulfide bond. The disordered stretch occupies residues 649–682; it reads VTTQSTWNDQPSTTQAPNSYESYTTQYSSNDVPS. 3 consecutive Chitin-binding type-2 domains span residues 689-745, 782-838, and 883-942; these read GDRC…ECGS, GDRC…KCQT, and VDTC…ACDE. A disulfide bridge connects residues Cys-721 and Cys-734. Residues 742–764 are disordered; sequence ECGSQGSTSSPVITTPGQDQSSN. The segment covering 745 to 764 has biased composition (polar residues); the sequence is SQGSTSSPVITTPGQDQSSN. 2 disulfides stabilise this stretch: Cys-814/Cys-827 and Cys-916/Cys-929. Residues 984–995 are compositionally biased toward polar residues; sequence TGSTKYSTTDSG. The tract at residues 984–1031 is disordered; sequence TGSTKYSTTDSGEYTIPYGDETTSTRSYDRADNDSEDEEEDDVEHDQK. N-linked (GlcNAc...) asparagine glycosylation occurs at Asn-1016. Positions 1017–1027 are enriched in acidic residues; sequence DSEDEEEDDVE. Chitin-binding type-2 domains follow at residues 1029–1081, 1105–1163, 1179–1237, and 1242–1298; these read DQKC…GCGK, EGRC…ACTV, SAFC…GCEN, and NGEC…SCSG. 4 cysteine pairs are disulfide-bonded: Cys-1060/Cys-1073, Cys-1139/Cys-1152, Cys-1213/Cys-1226, and Cys-1274/Cys-1287. Residues 1297–1312 are compositionally biased toward low complexity; it reads SGQASDSNSSYGSSTY. The disordered stretch occupies residues 1297–1319; the sequence is SGQASDSNSSYGSSTYNDDKSGY. The N-linked (GlcNAc...) asparagine glycan is linked to Asn-1304.

It is found in the secreted. It localises to the extracellular space. The protein resides in the extracellular matrix. Functionally, in unfertilized oocytes, maintains egg-1 and egg-2 at the plasma membrane together with chitin synthase chs-1 and kinase mbk-2. Essential for the formation of a continuous and cohesive chitin layer following fertilization. The sequence is that of Chitin-binding domain protein cbd-1 from Caenorhabditis elegans.